Consider the following 498-residue polypeptide: ATP synthase subunit beta, chloroplastic (498 aa).

172–179 (GGAGVGKT) contacts ATP.

This sequence belongs to the ATPase alpha/beta chains family. As to quaternary structure, F-type ATPases have 2 components, CF(1) - the catalytic core - and CF(0) - the membrane proton channel. CF(1) has five subunits: alpha(3), beta(3), gamma(1), delta(1), epsilon(1). CF(0) has four main subunits: a(1), b(1), b'(1) and c(9-12).

Its subcellular location is the plastid. It localises to the chloroplast thylakoid membrane. The enzyme catalyses ATP + H2O + 4 H(+)(in) = ADP + phosphate + 5 H(+)(out). In terms of biological role, produces ATP from ADP in the presence of a proton gradient across the membrane. The catalytic sites are hosted primarily by the beta subunits. The polypeptide is ATP synthase subunit beta, chloroplastic (Asarum canadense (Wild ginger)).